The following is a 519-amino-acid chain: Maturase K (519 aa).

It belongs to the intron maturase 2 family. MatK subfamily.

Its subcellular location is the plastid. It is found in the chloroplast. Functionally, usually encoded in the trnK tRNA gene intron. Probably assists in splicing its own and other chloroplast group II introns. This Aesculus pavia (Red buckeye) protein is Maturase K.